An 83-amino-acid chain; its full sequence is Turripeptide Lol11.2 (83 aa).

Residues Met-1–Thr-27 form the signal peptide.

Belongs to the conopeptide I2-like superfamily. In terms of processing, contains 4 disulfide bonds. In terms of tissue distribution, expressed by the venom duct.

Its subcellular location is the secreted. Acts as a neurotoxin by inhibiting voltage-gated potassium channels (Kv). The polypeptide is Turripeptide Lol11.2 (Iotyrris olangoensis (Sea snail)).